The primary structure comprises 106 residues: uncharacterized protein (106 aa).

The protein resides in the mitochondrion. This is an uncharacterized protein from Arabidopsis thaliana (Mouse-ear cress).